The sequence spans 349 residues: Nitrilase, bromoxynil-specific (349 aa).

The CN hydrolase domain occupies 5–274 (FKAAAVQAEP…EGIVYAEIDL (270 aa)). Glu-45 serves as the catalytic Proton acceptor. Lys-127 functions as the Proton donor in the catalytic mechanism. Residue Cys-161 is the Nucleophile of the active site.

It belongs to the carbon-nitrogen hydrolase superfamily. Nitrilase family. As to quaternary structure, homodimer.

The enzyme catalyses a nitrile + 2 H2O = a carboxylate + NH4(+). Functionally, specific for the herbicide bromoxynil (3,5-dibromo-4-hydroxybenzonitrile); converts it to its metabolite 3,5-dibromo-4-hydroxybenzoic acid. The protein is Nitrilase, bromoxynil-specific (bxn) of Klebsiella pneumoniae subsp. ozaenae.